Consider the following 513-residue polypeptide: MEAIISFAGIGINYKRLQSKLQHDFGRLLKALTVTARALPGQPKHIAIRQETAFTLQGEYIYFPILLRKQFEMFNMVYTARPVSLRALPCVETEFPLFNYQQEMVDKIHKKLLSPYGRFYLHLNTGLGKTRIAISIIQKLLYPTLVIVPTKAIQVQWIDELTLLLPHLRVAAYNNAACKKKDMTSKEYDVIVGIINTLRKKPEQFFEPFGLVVLDEAHELHSPENYKIFWKIQLSRILGLSATPLDRPDGMDKIIIHHLGQPQRTVSPTTTFSGYVREIEYQGHPDFVSPVCINEKVSAIATIDKLLQDPSRIQLVVNEAKRLYSLHTAEPHKWGTDEPYGIIIFVEFRKLLEIFYQALSKEFKDVQIIVPEVALLCGGVSNTALSQTHSASIILLTYGYGRRGISFKHMTSIIMATPRRNNMEQILGRITRQGSDEKKVRIVVDIKDTLSPLSSQVYDRHRIYKKKGYPIFKCSASYQQPYSSNEVLIWDPYNESCLACTTTPPSPSKQKHT.

The region spanning 110–262 (KKLLSPYGRF…KIIIHHLGQP (153 aa)) is the Helicase ATP-binding domain. 123-130 (LNTGLGKT) provides a ligand contact to ATP. Residues 215–218 (DEAH) carry the DEAH box motif.

It belongs to the DEAD box helicase family. DEAH subfamily.

It carries out the reaction ATP + H2O = ADP + phosphate + H(+). The chain is Putative ATP-dependent RNA helicase QP509L from African swine fever virus (isolate Tick/South Africa/Pretoriuskop Pr4/1996) (ASFV).